Consider the following 252-residue polypeptide: tRNA1(Val) (adenine(37)-N6)-methyltransferase (252 aa).

This sequence belongs to the methyltransferase superfamily. tRNA (adenine-N(6)-)-methyltransferase family.

The protein resides in the cytoplasm. The enzyme catalyses adenosine(37) in tRNA1(Val) + S-adenosyl-L-methionine = N(6)-methyladenosine(37) in tRNA1(Val) + S-adenosyl-L-homocysteine + H(+). Specifically methylates the adenine in position 37 of tRNA(1)(Val) (anticodon cmo5UAC). The protein is tRNA1(Val) (adenine(37)-N6)-methyltransferase of Yersinia pseudotuberculosis serotype O:3 (strain YPIII).